Here is a 297-residue protein sequence, read N- to C-terminus: Glycine--tRNA ligase alpha subunit (297 aa).

It belongs to the class-II aminoacyl-tRNA synthetase family. As to quaternary structure, tetramer of two alpha and two beta subunits.

The protein resides in the cytoplasm. The enzyme catalyses tRNA(Gly) + glycine + ATP = glycyl-tRNA(Gly) + AMP + diphosphate. This Sulfurihydrogenibium sp. (strain YO3AOP1) protein is Glycine--tRNA ligase alpha subunit.